Consider the following 358-residue polypeptide: Peptide chain release factor 1 (358 aa).

Q234 is modified (N5-methylglutamine).

This sequence belongs to the prokaryotic/mitochondrial release factor family. In terms of processing, methylated by PrmC. Methylation increases the termination efficiency of RF1.

It localises to the cytoplasm. Peptide chain release factor 1 directs the termination of translation in response to the peptide chain termination codons UAG and UAA. This chain is Peptide chain release factor 1, found in Akkermansia muciniphila (strain ATCC BAA-835 / DSM 22959 / JCM 33894 / BCRC 81048 / CCUG 64013 / CIP 107961 / Muc).